The sequence spans 304 residues: tRNA dimethylallyltransferase (304 aa).

13–20 (GPTAAGKT) contributes to the ATP binding site. 15–20 (TAAGKT) is a binding site for substrate. The interval 38 to 41 (DSRQ) is interaction with substrate tRNA.

This sequence belongs to the IPP transferase family. In terms of assembly, monomer. Requires Mg(2+) as cofactor.

It catalyses the reaction adenosine(37) in tRNA + dimethylallyl diphosphate = N(6)-dimethylallyladenosine(37) in tRNA + diphosphate. Functionally, catalyzes the transfer of a dimethylallyl group onto the adenine at position 37 in tRNAs that read codons beginning with uridine, leading to the formation of N6-(dimethylallyl)adenosine (i(6)A). This chain is tRNA dimethylallyltransferase, found in Cytophaga hutchinsonii (strain ATCC 33406 / DSM 1761 / CIP 103989 / NBRC 15051 / NCIMB 9469 / D465).